A 707-amino-acid polypeptide reads, in one-letter code: MKEWRREILGRELVVQHGKVAKQSSGAVLVRFGDTAVLATANISDKVIEGIDFVPLTVEFQERFYAAGKIPGGFIKREGKPSESAILSARLIDRPIRPLFPKKLRNEIQVIVTVLSADPNVPPDVVGIFAVSLALNVSKIPFEGIVAGIRIGYRDGQFIAFPTEEDIEKGLMDITVAGTKDAVTMVEGEAKEVSEEDMVKALRFAHSVIKELVDFQEEILSEFNVEKIPVVEPEPPEGLVETFNSLLDREELERRILVKAKKEREAALKEYEEKLLSQTAEALSIVDPEEIKPFVSELYEEAVKKTMRRLIVEKGIRADGRKPNEIRPISCEVGLFPRTHGSALFTRGETQSLGIVTLGAPMDVQIIDTLLEEGVKRFMLHYNFPPFCTGEVKPLRGPSRREIGHGHLAERALKNMLPPEEEFPYTIRVVSEILESNGSSSMATVCSGSLALMDAGVPIRKHVAGIAMGLILEEDAEVILTDIIGMEDHYGDMDFKVAGTRDGITAFQMDCKVSGVSDELLMKALMQAREARMYILDKMYETISAPRPHLSRYAPIIKVTKIDPDKVADVIGPGGRVIKKIIKDFDVKVEIDDETGLVKVVGNSEENVDNAIALIREIAKEIEVGEILEGKITRIEPYGLFIEVRPGKIGLLHQSKVGEDMRQFLKKVKVGDTIKVQVINIDDLGRLQFKRVKEESPQHGEVHNKRH.

Mg(2+) contacts are provided by Asp488 and Asp494. The 61-residue stretch at 555–615 folds into the KH domain; that stretch reads PIIKVTKIDP…ENVDNAIALI (61 aa). Residues 625 to 692 form the S1 motif domain; the sequence is GEILEGKITR…DLGRLQFKRV (68 aa).

This sequence belongs to the polyribonucleotide nucleotidyltransferase family. Mg(2+) serves as cofactor.

The protein localises to the cytoplasm. It carries out the reaction RNA(n+1) + phosphate = RNA(n) + a ribonucleoside 5'-diphosphate. In terms of biological role, involved in mRNA degradation. Catalyzes the phosphorolysis of single-stranded polyribonucleotides processively in the 3'- to 5'-direction. This is Polyribonucleotide nucleotidyltransferase from Thermotoga neapolitana (strain ATCC 49049 / DSM 4359 / NBRC 107923 / NS-E).